Consider the following 431-residue polypeptide: Serine--tRNA ligase (431 aa).

238–240 lines the L-serine pocket; sequence TAE. 269–271 contributes to the ATP binding site; sequence RSE. Glu-292 is a binding site for L-serine. 356–359 lines the ATP pocket; the sequence is EISS. Ser-391 contacts L-serine.

Belongs to the class-II aminoacyl-tRNA synthetase family. Type-1 seryl-tRNA synthetase subfamily. Homodimer. The tRNA molecule binds across the dimer.

It is found in the cytoplasm. The enzyme catalyses tRNA(Ser) + L-serine + ATP = L-seryl-tRNA(Ser) + AMP + diphosphate + H(+). It catalyses the reaction tRNA(Sec) + L-serine + ATP = L-seryl-tRNA(Sec) + AMP + diphosphate + H(+). Its pathway is aminoacyl-tRNA biosynthesis; selenocysteinyl-tRNA(Sec) biosynthesis; L-seryl-tRNA(Sec) from L-serine and tRNA(Sec): step 1/1. Its function is as follows. Catalyzes the attachment of serine to tRNA(Ser). Is also able to aminoacylate tRNA(Sec) with serine, to form the misacylated tRNA L-seryl-tRNA(Sec), which will be further converted into selenocysteinyl-tRNA(Sec). This chain is Serine--tRNA ligase, found in Bdellovibrio bacteriovorus (strain ATCC 15356 / DSM 50701 / NCIMB 9529 / HD100).